Here is a 208-residue protein sequence, read N- to C-terminus: Protein-L-isoaspartate O-methyltransferase (208 aa).

The active site involves Ser59.

This sequence belongs to the methyltransferase superfamily. L-isoaspartyl/D-aspartyl protein methyltransferase family.

It is found in the cytoplasm. It catalyses the reaction [protein]-L-isoaspartate + S-adenosyl-L-methionine = [protein]-L-isoaspartate alpha-methyl ester + S-adenosyl-L-homocysteine. In terms of biological role, catalyzes the methyl esterification of L-isoaspartyl residues in peptides and proteins that result from spontaneous decomposition of normal L-aspartyl and L-asparaginyl residues. It plays a role in the repair and/or degradation of damaged proteins. This Klebsiella pneumoniae subsp. pneumoniae (strain ATCC 700721 / MGH 78578) protein is Protein-L-isoaspartate O-methyltransferase.